We begin with the raw amino-acid sequence, 428 residues long: Serine--tRNA ligase (428 aa).

231–233 (TAE) contacts L-serine. 262-264 (RSE) lines the ATP pocket. L-serine is bound at residue Glu285. 349-352 (EISS) contributes to the ATP binding site. Ser385 contacts L-serine.

It belongs to the class-II aminoacyl-tRNA synthetase family. Type-1 seryl-tRNA synthetase subfamily. As to quaternary structure, homodimer. The tRNA molecule binds across the dimer.

It localises to the cytoplasm. The catalysed reaction is tRNA(Ser) + L-serine + ATP = L-seryl-tRNA(Ser) + AMP + diphosphate + H(+). The enzyme catalyses tRNA(Sec) + L-serine + ATP = L-seryl-tRNA(Sec) + AMP + diphosphate + H(+). Its pathway is aminoacyl-tRNA biosynthesis; selenocysteinyl-tRNA(Sec) biosynthesis; L-seryl-tRNA(Sec) from L-serine and tRNA(Sec): step 1/1. In terms of biological role, catalyzes the attachment of serine to tRNA(Ser). Is also able to aminoacylate tRNA(Sec) with serine, to form the misacylated tRNA L-seryl-tRNA(Sec), which will be further converted into selenocysteinyl-tRNA(Sec). This chain is Serine--tRNA ligase, found in Staphylococcus aureus (strain MRSA252).